Reading from the N-terminus, the 341-residue chain is tRNA N6-adenosine threonylcarbamoyltransferase (341 aa).

H111 and H115 together coordinate Fe cation. Substrate-binding positions include 134 to 138 (LVSGG), D167, G180, and N276. Position 304 (D304) interacts with Fe cation.

It belongs to the KAE1 / TsaD family. Requires Fe(2+) as cofactor.

The protein resides in the cytoplasm. The enzyme catalyses L-threonylcarbamoyladenylate + adenosine(37) in tRNA = N(6)-L-threonylcarbamoyladenosine(37) in tRNA + AMP + H(+). In terms of biological role, required for the formation of a threonylcarbamoyl group on adenosine at position 37 (t(6)A37) in tRNAs that read codons beginning with adenine. Is involved in the transfer of the threonylcarbamoyl moiety of threonylcarbamoyl-AMP (TC-AMP) to the N6 group of A37, together with TsaE and TsaB. TsaD likely plays a direct catalytic role in this reaction. The protein is tRNA N6-adenosine threonylcarbamoyltransferase of Pseudomonas aeruginosa (strain UCBPP-PA14).